Reading from the N-terminus, the 209-residue chain is Uracil phosphoribosyltransferase (209 aa).

Residues R79, R104, and 131-139 (DPMLATGGS) contribute to the 5-phospho-alpha-D-ribose 1-diphosphate site. Residues I194 and 199–201 (GDA) each bind uracil. D200 serves as a coordination point for 5-phospho-alpha-D-ribose 1-diphosphate.

This sequence belongs to the UPRTase family. It depends on Mg(2+) as a cofactor.

The enzyme catalyses UMP + diphosphate = 5-phospho-alpha-D-ribose 1-diphosphate + uracil. It functions in the pathway pyrimidine metabolism; UMP biosynthesis via salvage pathway; UMP from uracil: step 1/1. Allosterically activated by GTP. Functionally, catalyzes the conversion of uracil and 5-phospho-alpha-D-ribose 1-diphosphate (PRPP) to UMP and diphosphate. In Clostridium tetani (strain Massachusetts / E88), this protein is Uracil phosphoribosyltransferase.